The sequence spans 155 residues: SsrA-binding protein (155 aa).

This sequence belongs to the SmpB family.

It localises to the cytoplasm. Its function is as follows. Required for rescue of stalled ribosomes mediated by trans-translation. Binds to transfer-messenger RNA (tmRNA), required for stable association of tmRNA with ribosomes. tmRNA and SmpB together mimic tRNA shape, replacing the anticodon stem-loop with SmpB. tmRNA is encoded by the ssrA gene; the 2 termini fold to resemble tRNA(Ala) and it encodes a 'tag peptide', a short internal open reading frame. During trans-translation Ala-aminoacylated tmRNA acts like a tRNA, entering the A-site of stalled ribosomes, displacing the stalled mRNA. The ribosome then switches to translate the ORF on the tmRNA; the nascent peptide is terminated with the 'tag peptide' encoded by the tmRNA and targeted for degradation. The ribosome is freed to recommence translation, which seems to be the essential function of trans-translation. The chain is SsrA-binding protein from Bordetella parapertussis (strain 12822 / ATCC BAA-587 / NCTC 13253).